The primary structure comprises 154 residues: Myoglobin (154 aa).

The region spanning 2–148 (GLSDQEWQQV…FRNDMASKYK (147 aa)) is the Globin domain. Histidine 65 provides a ligand contact to nitrite. An O2-binding site is contributed by histidine 65. Position 94 (histidine 94) interacts with heme b.

This sequence belongs to the globin family. As to quaternary structure, monomeric.

It localises to the cytoplasm. It is found in the sarcoplasm. The enzyme catalyses Fe(III)-heme b-[protein] + nitric oxide + H2O = Fe(II)-heme b-[protein] + nitrite + 2 H(+). It carries out the reaction H2O2 + AH2 = A + 2 H2O. In terms of biological role, monomeric heme protein which primary function is to store oxygen and facilitate its diffusion within muscle tissues. Reversibly binds oxygen through a pentacoordinated heme iron and enables its timely and efficient release as needed during periods of heightened demand. Depending on the oxidative conditions of tissues and cells, and in addition to its ability to bind oxygen, it also has a nitrite reductase activity whereby it regulates the production of bioactive nitric oxide. Under stress conditions, like hypoxia and anoxia, it also protects cells against reactive oxygen species thanks to its pseudoperoxidase activity. The polypeptide is Myoglobin (MB) (Aethia pygmaea (Whiskered auklet)).